The primary structure comprises 112 residues: Flowering-promoting factor 1-like protein 2 (112 aa).

The protein belongs to the FPF1 family. As to expression, expressed in leaves and in some parts of the flowers, mainly in the sepals.

Modulates the competence to flowering of apical meristems. The polypeptide is Flowering-promoting factor 1-like protein 2 (FLP2) (Arabidopsis thaliana (Mouse-ear cress)).